The chain runs to 185 residues: ATP synthase subunit b, cyanelle (185 aa).

A helical transmembrane segment spans residues 36–58 (LINLLVIFFLLIYQGRPFFTALL).

Belongs to the ATPase B chain family. F-type ATPases have 2 components, F(1) - the catalytic core - and F(0) - the membrane proton channel. F(1) has five subunits: alpha(3), beta(3), gamma(1), delta(1), epsilon(1). F(0) has four main subunits: a(1), b(1), b'(1) and c(10-14). The alpha and beta chains form an alternating ring which encloses part of the gamma chain. F(1) is attached to F(0) by a central stalk formed by the gamma and epsilon chains, while a peripheral stalk is formed by the delta, b and b' chains.

It localises to the plastid. It is found in the cyanelle thylakoid membrane. In terms of biological role, f(1)F(0) ATP synthase produces ATP from ADP in the presence of a proton or sodium gradient. F-type ATPases consist of two structural domains, F(1) containing the extramembraneous catalytic core and F(0) containing the membrane proton channel, linked together by a central stalk and a peripheral stalk. During catalysis, ATP synthesis in the catalytic domain of F(1) is coupled via a rotary mechanism of the central stalk subunits to proton translocation. Functionally, component of the F(0) channel, it forms part of the peripheral stalk, linking F(1) to F(0). This chain is ATP synthase subunit b, cyanelle, found in Cyanophora paradoxa.